A 472-amino-acid polypeptide reads, in one-letter code: Chromosomal replication initiator protein DnaA (472 aa).

The tract at residues 1–73 (MSNMEHDRWS…LTCWQAELPE (73 aa)) is domain I, interacts with DnaA modulators. Residues 73-128 (EVCRIDLTVRSPMRAAVAKEAAAPVEHRRAEHRPATETRSHATVPASSNHDALGGS) form a domain II region. The interval 92 to 127 (EAAAPVEHRRAEHRPATETRSHATVPASSNHDALGG) is disordered. Basic and acidic residues predominate over residues 97–112 (VEHRRAEHRPATETRS). The interval 129–351 (PLDPRLTFAS…GAINRLLAHS (223 aa)) is domain III, AAA+ region. ATP-binding residues include Gly-176, Gly-178, Lys-179, and Thr-180. Residues 352-472 (KLNAQPVTLE…VDSLKRQLQE (121 aa)) form a domain IV, binds dsDNA region.

This sequence belongs to the DnaA family. In terms of assembly, oligomerizes as a right-handed, spiral filament on DNA at oriC.

It is found in the cytoplasm. In terms of biological role, plays an essential role in the initiation and regulation of chromosomal replication. ATP-DnaA binds to the origin of replication (oriC) to initiate formation of the DNA replication initiation complex once per cell cycle. Binds the DnaA box (a 9 base pair repeat at the origin) and separates the double-stranded (ds)DNA. Forms a right-handed helical filament on oriC DNA; dsDNA binds to the exterior of the filament while single-stranded (ss)DNA is stabiized in the filament's interior. The ATP-DnaA-oriC complex binds and stabilizes one strand of the AT-rich DNA unwinding element (DUE), permitting loading of DNA polymerase. After initiation quickly degrades to an ADP-DnaA complex that is not apt for DNA replication. Binds acidic phospholipids. This is Chromosomal replication initiator protein DnaA from Rhodopseudomonas palustris (strain HaA2).